The chain runs to 171 residues: Ly6/PLAUR domain-containing protein 6 (171 aa).

Residues 1-25 form the signal peptide; it reads MEPSPALAWLLLLSLVADCLKAAQS. Residues 47–141 form the UPAR/Ly6 domain; sequence FKCFTCEKAA…PRNDTDATFA (95 aa). Cystine bridges form between C49/C77, C52/C61, C70/C96, C102/C121, C107/C118, and C122/C127. The NxI motif motif lies at 88–90; sequence NSI. N-linked (GlcNAc...) asparagine glycans are attached at residues N134 and N147. Residue N147 is the site of GPI-anchor amidated asparagine attachment. Residues 148–171 constitute a propeptide, removed in mature form; the sequence is QTNGHPHCVSVIVSCLWVWLGLTL.

As to quaternary structure, interacts with nicotinic acetylcholine receptors (nAChRs) including CHRNA3, CHRNA4, CHRNA5, CHRNA6, CHRNA7, CHRNB2 and CHRNB4. Interacts (via NxI motif) with LRP6. As to expression, expressed at high levels in the cortex and cerebellum of the brain, at moderate levels in the lung, kidney, and liver, and at low levels in the heart and prostate (at protein level). Expressed in neurons (at protein level).

It is found in the secreted. Its subcellular location is the cytoplasm. It localises to the cell membrane. The protein localises to the synapse. The protein resides in the synaptosome. It is found in the membrane raft. Its subcellular location is the cell projection. It localises to the dendrite. The protein localises to the perikaryon. Acts as a modulator of nicotinic acetylcholine receptors (nAChRs) function in the brain. Inhibits nicotine-induced Ca(2+) influx through nAChRs. In vitro, specifically inhibits alpha-3:beta-4 and alpha-7 nAChR currents in an allosteric manner. Acts as a positive regulator of Wnt/beta-catenin signaling. This is Ly6/PLAUR domain-containing protein 6 (Lypd6) from Rattus norvegicus (Rat).